A 622-amino-acid polypeptide reads, in one-letter code: 1,4-alpha-glucan branching enzyme GlgB (622 aa).

Asp-300 (nucleophile) is an active-site residue. Glu-351 functions as the Proton donor in the catalytic mechanism.

Belongs to the glycosyl hydrolase 13 family. GlgB subfamily. As to quaternary structure, monomer.

It carries out the reaction Transfers a segment of a (1-&gt;4)-alpha-D-glucan chain to a primary hydroxy group in a similar glucan chain.. Its pathway is glycan biosynthesis; glycogen biosynthesis. Catalyzes the formation of the alpha-1,6-glucosidic linkages in glycogen by scission of a 1,4-alpha-linked oligosaccharide from growing alpha-1,4-glucan chains and the subsequent attachment of the oligosaccharide to the alpha-1,6 position. The sequence is that of 1,4-alpha-glucan branching enzyme GlgB from Streptococcus agalactiae serotype III (strain NEM316).